A 212-amino-acid chain; its full sequence is 3-isopropylmalate dehydratase small subunit (212 aa).

The protein belongs to the LeuD family. LeuD type 1 subfamily. Heterodimer of LeuC and LeuD.

The enzyme catalyses (2R,3S)-3-isopropylmalate = (2S)-2-isopropylmalate. The protein operates within amino-acid biosynthesis; L-leucine biosynthesis; L-leucine from 3-methyl-2-oxobutanoate: step 2/4. Catalyzes the isomerization between 2-isopropylmalate and 3-isopropylmalate, via the formation of 2-isopropylmaleate. This chain is 3-isopropylmalate dehydratase small subunit, found in Laribacter hongkongensis (strain HLHK9).